The following is a 227-amino-acid chain: Orotate phosphoribosyltransferase (227 aa).

Lys34 is a binding site for 5-phospho-alpha-D-ribose 1-diphosphate. An orotate-binding site is contributed by 42 to 43 (FF). Residues 80–81 (YK), Arg106, Lys107, Lys110, His112, and 131–139 (DDVISAGTS) contribute to the 5-phospho-alpha-D-ribose 1-diphosphate site. Orotate-binding residues include Ser135 and Arg163.

The protein belongs to the purine/pyrimidine phosphoribosyltransferase family. PyrE subfamily. As to quaternary structure, homodimer. The cofactor is Mg(2+).

It catalyses the reaction orotidine 5'-phosphate + diphosphate = orotate + 5-phospho-alpha-D-ribose 1-diphosphate. The protein operates within pyrimidine metabolism; UMP biosynthesis via de novo pathway; UMP from orotate: step 1/2. Its function is as follows. Catalyzes the transfer of a ribosyl phosphate group from 5-phosphoribose 1-diphosphate to orotate, leading to the formation of orotidine monophosphate (OMP). In Cupriavidus necator (strain ATCC 17699 / DSM 428 / KCTC 22496 / NCIMB 10442 / H16 / Stanier 337) (Ralstonia eutropha), this protein is Orotate phosphoribosyltransferase.